The sequence spans 107 residues: Inner membrane protein YgbE (107 aa).

Over 1-20 (MRNSHNITLTNNDSLTEDEE) the chain is Cytoplasmic. A helical membrane pass occupies residues 21–43 (TTWSLPGAVVGFISWLFALAMPM). The Periplasmic portion of the chain corresponds to 44–52 (LIYGSNTLF). The helical transmembrane segment at 53 to 75 (FFIYTWPFFLALMPVAVVVGIAL) threads the bilayer. Topologically, residues 76 to 86 (HSLMDGKLRYS) are cytoplasmic. A helical transmembrane segment spans residues 87 to 106 (IVFTLVTVGIMFGALFMWLL). A topological domain (periplasmic) is located at residue Gly-107.

Its subcellular location is the cell inner membrane. The polypeptide is Inner membrane protein YgbE (ygbE) (Escherichia coli (strain K12)).